Here is an 89-residue protein sequence, read N- to C-terminus: Small ribosomal subunit protein bS20 (89 aa).

Positions 1 to 12 (MANHKSAIKRHR) are enriched in basic residues. Residues 1–26 (MANHKSAIKRHRQSVERAGRNRAART) form a disordered region.

It belongs to the bacterial ribosomal protein bS20 family.

Binds directly to 16S ribosomal RNA. The polypeptide is Small ribosomal subunit protein bS20 (Desulfovibrio desulfuricans (strain ATCC 27774 / DSM 6949 / MB)).